The primary structure comprises 214 residues: Large ribosomal subunit protein uL3 (214 aa).

Glutamine 151 is subject to N5-methylglutamine.

Belongs to the universal ribosomal protein uL3 family. As to quaternary structure, part of the 50S ribosomal subunit. Forms a cluster with proteins L14 and L19. In terms of processing, methylated by PrmB.

One of the primary rRNA binding proteins, it binds directly near the 3'-end of the 23S rRNA, where it nucleates assembly of the 50S subunit. This Magnetococcus marinus (strain ATCC BAA-1437 / JCM 17883 / MC-1) protein is Large ribosomal subunit protein uL3.